The sequence spans 213 residues: Transcriptional regulatory protein CrdR (213 aa).

Residues 4 to 119 (KIFLLEDDYL…ELEARIKRFF (116 aa)) form the Response regulatory domain. Aspartate 53 carries the 4-aspartylphosphate modification. The ompR/PhoB-type DNA-binding region spans 121–212 (DDPIEIMPNI…HKGVGYRFNP (92 aa)).

Phosphorylated by CrdS.

Functionally, member of the two-component regulatory system CrdR/CrdS that induces the transcriptional induction of the copper resistance determinant CrdA. Upon phosphorylation by CrdS, functions as a transcriptional regulator by direct binding to promoter regions of target genes including the crdA promoter or nitric oxide-responsive gene promoters. This is Transcriptional regulatory protein CrdR from Helicobacter pylori (strain ATCC 700392 / 26695) (Campylobacter pylori).